Reading from the N-terminus, the 262-residue chain is 14-3-3 protein I (262 aa).

This sequence belongs to the 14-3-3 family. Homodimer. Forms a complex composed of CDPK1, PKA regulatory subunit PKAr and 14-3-3I; the complex is formed in merozoites in response to low extracellular level of K(+) and may play a role in microneme secretion. Interacts with CDPK1 (when phosphorylated) in a Ca(2+)-independent manner; the interaction does not regulate CDPK1 catalytic activity but is required for merozoite invasion of host erythrocytes. Interacts with PKA regulatory subunit PKAr (when phosphorylated) in a Ca(2+)-dependent manner. Interacts with histone H3 (when phosphorylated at 'Ser-28' or when phosphorylated at 'Ser-28' and 'Ser-32').

It is found in the cell membrane. The protein resides in the cytoplasm. It localises to the nucleus. Adapter protein which binds to its partners, usually via a phosphoserine or phosphothreonine motif. Binding generally results in the modulation of the activity and/or cellular localization of the binding partner. Via its interaction with CDPK1 and PKAr, involved in merozoite microneme secretion and thus in merozoite invasion of host erythrocytes. This chain is 14-3-3 protein I, found in Plasmodium falciparum (isolate 3D7).